The primary structure comprises 401 residues: MELRATVENRIRYSTKHIKHLPPGSITEFDWKDYCPVGFGLIQELEGIDHDDYLLSICTDETLKKISSGKIGNVFHISNDNRFLIKILRKSEIKVTLEMLPRYYRHINYHRSSLFTRIFGAHSVKPLGGVKTYFAVMSNMLHSTIFVNKLYDLKGSPKGRSNKKIEVRNTTVLKDIDFDFCFYVDPLARQRIIKQTKLDCELLEEEGIMDYSLLVGLQSKGSCQGSLDGLNPVYGSFAPPSSFKSNSTKSMKTASSSPDRSSVAMYSCSPDRDSVENEMSMTIQSVTSNSASSETNILATTLSDLFHNSSNINFGMKIPARARRVTRETGEEEWYNVVLYIGIVDTFQDYGMKKRIEHCYKSIQYNSNSISTVHPKIYSSRFQDFVSNIFLPHDDDLSSKY.

One can recognise a PIPK domain in the interval 1 to 390 (MELRATVENR…RFQDFVSNIF (390 aa)). Polar residues predominate over residues 242 to 260 (SFKSNSTKSMKTASSSPDR). The tract at residues 242-268 (SFKSNSTKSMKTASSSPDRSSVAMYSC) is disordered. Residues 350–371 (YGMKKRIEHCYKSIQYNSNSIS) form an activation loop region.

It catalyses the reaction a 1,2-diacyl-sn-glycero-3-phospho-(1D-myo-inositol 4-phosphate) + ATP = a 1,2-diacyl-sn-glycero-3-phospho-(1D-myo-inositol-4,5-bisphosphate) + ADP + H(+). The polypeptide is Putative phosphatidylinositol 4-phosphate 5-kinase 11 (PIP5K11) (Arabidopsis thaliana (Mouse-ear cress)).